We begin with the raw amino-acid sequence, 317 residues long: Carbonic anhydrase 5B, mitochondrial (317 aa).

Residues 1-33 (MTVMSHLRVSLQVSSCTLLWRRFRVPRLVPLRS) constitute a mitochondrion transit peptide. Residues 37 to 296 (YTCTYRTRNR…LMNRTVRSSF (260 aa)) enclose the Alpha-carbonic anhydrase domain. Histidine 130, histidine 132, and histidine 155 together coordinate Zn(2+). 235–236 (TT) is a substrate binding site.

Belongs to the alpha-carbonic anhydrase family. The cofactor is Zn(2+).

The protein localises to the mitochondrion. The catalysed reaction is hydrogencarbonate + H(+) = CO2 + H2O. In terms of biological role, mitochondrial carbonic anhydrase that catalyzes the reversible conversion of carbon dioxide to bicarbonate/HCO3. The protein is Carbonic anhydrase 5B, mitochondrial (Ca5b) of Rattus norvegicus (Rat).